We begin with the raw amino-acid sequence, 140 residues long: Hemoglobin subunit alpha (140 aa).

Positions 1-140 (LSAADKGHVK…VSTVLTSKYR (140 aa)) constitute a Globin domain. S2 bears the Phosphoserine mark. N6-succinyllysine occurs at positions 6 and 10. K15 bears the N6-acetyllysine; alternate mark. Residue K15 is modified to N6-succinyllysine; alternate. Y23 is subject to Phosphotyrosine. S34 bears the Phosphoserine mark. K39 carries the N6-succinyllysine modification. S48 is modified (phosphoserine). H57 contributes to the O2 binding site. H86 lines the heme b pocket. S101 is modified (phosphoserine). At T107 the chain carries Phosphothreonine. S123 carries the post-translational modification Phosphoserine. T133 and T136 each carry phosphothreonine. Position 137 is a phosphoserine (S137).

It belongs to the globin family. As to quaternary structure, heterotetramer of two alpha chains and two beta chains. In terms of tissue distribution, red blood cells.

In terms of biological role, involved in oxygen transport from the lung to the various peripheral tissues. Functionally, hemopressin acts as an antagonist peptide of the cannabinoid receptor CNR1. Hemopressin-binding efficiently blocks cannabinoid receptor CNR1 and subsequent signaling. The sequence is that of Hemoglobin subunit alpha (HBA) from Tragelaphus strepsiceros (Greater kudu).